A 177-amino-acid polypeptide reads, in one-letter code: MDLPGPIHDIFLVFLGSGLILGGLGVVLLTNPVYSAFSLGLVLVCISLFHIPSNSYFVAAAQLLIYVGAINVLIVFAVMFMNGSEYYNYFHLWTVGDGVTSLICTSILFSLIKTILDTSWYGIIWTTRSNQIIEQDLISNVQQIGIHLSTDFYLPFELISIILLVALVGAIAMARQE.

5 helical membrane-spanning segments follow: residues 10–30 (IFLV…VLLT), 32–52 (PVYS…FHIP), 61–81 (AQLL…VMFM), 92–112 (LWTV…FSLI), and 152–172 (FYLP…GAIA).

Belongs to the complex I subunit 6 family. NDH is composed of at least 16 different subunits, 5 of which are encoded in the nucleus.

The protein localises to the plastid. Its subcellular location is the chloroplast thylakoid membrane. It carries out the reaction a plastoquinone + NADH + (n+1) H(+)(in) = a plastoquinol + NAD(+) + n H(+)(out). The enzyme catalyses a plastoquinone + NADPH + (n+1) H(+)(in) = a plastoquinol + NADP(+) + n H(+)(out). NDH shuttles electrons from NAD(P)H:plastoquinone, via FMN and iron-sulfur (Fe-S) centers, to quinones in the photosynthetic chain and possibly in a chloroplast respiratory chain. The immediate electron acceptor for the enzyme in this species is believed to be plastoquinone. Couples the redox reaction to proton translocation, and thus conserves the redox energy in a proton gradient. The polypeptide is NAD(P)H-quinone oxidoreductase subunit 6, chloroplastic (ndhG) (Illicium oligandrum (Star anise)).